The sequence spans 542 residues: MAKMIAFDEEARRGLERGMNRLADAVKVTLGPKGRNVVLANKFGLPTITNDGVSIAREIELENSYERIGAELVKEVAKKTNDVAGDGTTTATILAQALVREGLRNVAAGANPLGLKKGIEVAVERVSEELSKQAKEVETKEQIASTASISAGDSAIGGLIAEALDKVGKEGVVTVEESNTFGLELELTEGMRFDKGYISPYFVTDADRQEAVLDDPYILIVNSKIAAVKDLLPLLEKVMQTSKPLVIISEDVEGEALATLVVNKIRGTFKSVAVKAPGFGDRRKAILGDIAILTGGQVISEDVGLKLESTSLDLLGRARKIVVTKDETTVVEGSGDPDQIAGRVSQIRNEIDKSDSDYDREKLQERLAKLAGGVAVIKVGAATEVELKEKKHRIEDAVSNAKAAVEEGIVAGGGVALLQASITAFEKLDLSGDEATGANIVRLALEAPIKQIAFNSGLEGGVVVDKVRNLPTGHGLNAATGEYVDLIATGIIDPAKVTRSALQNAASIAGLFLTTEAVVANTPEYAEADAANVDAAMRSQGF.

Residues 29 to 32, 86 to 90, G413, 477 to 479, and D493 each bind ATP; these read TLGP, DGTTT, and NAA.

It belongs to the chaperonin (HSP60) family. As to quaternary structure, forms a cylinder of 14 subunits composed of two heptameric rings stacked back-to-back. Interacts with the co-chaperonin GroES.

It is found in the cytoplasm. The catalysed reaction is ATP + H2O + a folded polypeptide = ADP + phosphate + an unfolded polypeptide.. Its function is as follows. Together with its co-chaperonin GroES, plays an essential role in assisting protein folding. The GroEL-GroES system forms a nano-cage that allows encapsulation of the non-native substrate proteins and provides a physical environment optimized to promote and accelerate protein folding. The polypeptide is Chaperonin GroEL 3 (Frankia alni (strain DSM 45986 / CECT 9034 / ACN14a)).